Reading from the N-terminus, the 201-residue chain is Probable molybdenum cofactor guanylyltransferase (201 aa).

GTP is bound by residues 16–18, K28, D75, and D107; that span reads LAG. D107 is a Mg(2+) binding site.

It belongs to the MobA family. It depends on Mg(2+) as a cofactor.

It localises to the cytoplasm. The catalysed reaction is Mo-molybdopterin + GTP + H(+) = Mo-molybdopterin guanine dinucleotide + diphosphate. Its function is as follows. Transfers a GMP moiety from GTP to Mo-molybdopterin (Mo-MPT) cofactor (Moco or molybdenum cofactor) to form Mo-molybdopterin guanine dinucleotide (Mo-MGD) cofactor. The chain is Probable molybdenum cofactor guanylyltransferase from Mycobacterium marinum (strain ATCC BAA-535 / M).